Reading from the N-terminus, the 396-residue chain is MAQDKFKRTKLHVNVGTIGHVDHGKTTLTAALTKVGAERFGGEFKAYDAIDAAPEEKARGITISTAHVEYETEVRHYAHVDCPGHADYVKNMITGAAQMDGAILVCSAADGPMPQTREHILLARQVGVPYIVVFLNKADMVDDAELLELVEMEVRELLSKYDFPGDDTPIVRGSALKALEGDQSEIGVPAIIRLAEALDTHIPNPERAIDRPFLMPVEDVFSISGRGTVVTGRVECGVIKVGDEVEIVGIRPTSKTIVTGVEMFRKLLDQGQAGDNAGLLLRGTKRDEVERGQVLAKPGSIKAHKEFEAEVYVLSKEEGGRHTPFFNGYTPQFYMRTTDITGKVCLPEGVEMVMPGDNVKVTVSLINPVAMGEGQRFAIREGGRTVGAGVVSKVIG.

Positions 10–206 (KLHVNVGTIG…ALDTHIPNPE (197 aa)) constitute a tr-type G domain. The G1 stretch occupies residues 19–26 (GHVDHGKT). Residue 19 to 26 (GHVDHGKT) coordinates GTP. Thr-26 contacts Mg(2+). Residues 60-64 (GITIS) are G2. Residues 81–84 (DCPG) are G3. Residues 81–85 (DCPGH) and 136–139 (NKAD) contribute to the GTP site. The segment at 136 to 139 (NKAD) is G4. The tract at residues 174–176 (SAL) is G5.

Belongs to the TRAFAC class translation factor GTPase superfamily. Classic translation factor GTPase family. EF-Tu/EF-1A subfamily. Monomer.

It is found in the cytoplasm. It carries out the reaction GTP + H2O = GDP + phosphate + H(+). Its function is as follows. GTP hydrolase that promotes the GTP-dependent binding of aminoacyl-tRNA to the A-site of ribosomes during protein biosynthesis. The chain is Elongation factor Tu from Xylella fastidiosa (strain 9a5c).